A 303-amino-acid polypeptide reads, in one-letter code: Counting factor 50 (303 aa).

An N-terminal signal peptide occupies residues 1–24 (MNKMNNIFLIISSIILSIVIFVSG). The 213-residue stretch at 28–240 (IDFSSEISVG…CSTSSGSASG (213 aa)) folds into the Ch-type lysozyme domain. N67 is a glycosylation site (N-linked (GlcNAc...) asparagine). Residue E125 is part of the active site. N170 is a glycosylation site (N-linked (GlcNAc...) asparagine). The segment at 226 to 303 (GSGSGCSTSS…GSGTGSGSSI (78 aa)) is S-G-S motif repeats. Over residues 236–292 (GSASGSASGSASGSASGSNSGSSNSGSSNSGSSNSGSNSGSSNSGSGNSGSSNSGSA) the composition is skewed to low complexity. Positions 236 to 303 (GSASGSASGS…GSGTGSGSSI (68 aa)) are disordered. A compositionally biased stretch (gly residues) spans 293–303 (SGSGTGSGSSI).

The protein belongs to the glycosyl hydrolase 25 family. Monomer. Component of the counting factor (CF) complex, which includes cf60, cf50, cf45-1 and ctnA.

It is found in the secreted. It catalyses the reaction Hydrolysis of (1-&gt;4)-beta-linkages between N-acetylmuramic acid and N-acetyl-D-glucosamine residues in a peptidoglycan and between N-acetyl-D-glucosamine residues in chitodextrins.. In terms of biological role, cell-counting factor that limits the maximum size of the multicellular structure during aggregation. Has a very low lysozyme activity. This chain is Counting factor 50 (cf50-1), found in Dictyostelium discoideum (Social amoeba).